We begin with the raw amino-acid sequence, 122 residues long: Large ribosomal subunit protein uL14 (122 aa).

The protein belongs to the universal ribosomal protein uL14 family. Part of the 50S ribosomal subunit. Forms a cluster with proteins L3 and L19. In the 70S ribosome, L14 and L19 interact and together make contacts with the 16S rRNA in bridges B5 and B8.

Its function is as follows. Binds to 23S rRNA. Forms part of two intersubunit bridges in the 70S ribosome. This Clostridium tetani (strain Massachusetts / E88) protein is Large ribosomal subunit protein uL14.